Consider the following 347-residue polypeptide: Tyrosine recombinase XerC 2 (347 aa).

Positions 17 to 108 (LVLTRYMEAH…PLKTWFKWLA (92 aa)) constitute a Core-binding (CB) domain. The Tyr recombinase domain occupies 125–313 (KLPKHLPRAI…SIEHLRAIHD (189 aa)). Residues Arg-170, Lys-195, His-265, Arg-268, and His-291 contribute to the active site. Residue Tyr-300 is the O-(3'-phospho-DNA)-tyrosine intermediate of the active site.

Belongs to the 'phage' integrase family.

The protein resides in the cytoplasm. Its function is as follows. Site-specific tyrosine recombinase, which acts by catalyzing the cutting and rejoining of the recombining DNA molecules. The protein is Tyrosine recombinase XerC 2 of Ralstonia nicotianae (strain ATCC BAA-1114 / GMI1000) (Ralstonia solanacearum).